The chain runs to 577 residues: Protein CBFA2T1 (577 aa).

Residues 1–10 show a composition bias toward basic and acidic residues; it reads MPDRTEKHST. A disordered region spans residues 1-87; that stretch reads MPDRTEKHST…SSSSLANQQL (87 aa). A Phosphoserine modification is found at Ser14. Over residues 42–59 the composition is skewed to polar residues; it reads SSFTPTTLTNGTSHSPTA. The segment covering 68–87 has biased composition (low complexity); the sequence is NGFSNGPSSSSSSSLANQQL. In terms of domain architecture, TAFH spans 93-188; the sequence is ARQLSKLKRF…NPAQYLAQHE (96 aa). Positions 203-271 are disordered; that stretch reads SELLLDVNEN…LPHPTPPPPQ (69 aa). Residues 211 to 237 show a composition bias toward basic and acidic residues; it reads ENGKRRTPDRTKENGFDREPLHSEHPS. The segment covering 244-258 has biased composition (polar residues); that stretch reads SPGQRYSPNNGLSYQ. The span at 262 to 271 shows a compositional bias: pro residues; the sequence is LPHPTPPPPQ. Positions 310-356 are important for oligomerization; the sequence is QEEMIDHRLTDREWAEEWKHLDHLLNCIMDMVEKTRRSLTVLRRCQE. The interval 310 to 356 is nervy homology region 2 (NHR2); that stretch reads QEEMIDHRLTDREWAEEWKHLDHLLNCIMDMVEKTRRSLTVLRRCQE. The disordered stretch occupies residues 374–396; that stretch reads DLKKGGSSSSSHSRQQSPVNPDP. A compositionally biased stretch (low complexity) spans 380-390; sequence SSSSSHSRQQS. Ser390 bears the Phosphoserine mark. The interval 416–465 is nervy homology region 3 (NHR3); it reads EEIWKKAEEAVNEVKRQAMTELQKAVSEAERKAHDMITTERAKMERTVAE. Residues Cys488, Cys491, Cys499, Cys502, Cys508, Cys512, His520, and Cys524 each coordinate Zn(2+). Residues 488-524 form an MYND-type zinc finger; sequence CWNCGRKASETCSGCNTARYCGSFCQHKDWEKHHHIC. Residues 529-577 are disordered; that stretch reads QAPQQGDTPAVSSSVTPSSGAGSPMDTPPAATPRSTTPGTPSTIETTPR. 2 stretches are compositionally biased toward low complexity: residues 536 to 553 and 560 to 577; these read TPAV…GSPM and TPRS…TTPR.

It belongs to the CBFA2T family. As to quaternary structure, homotetramer. Heterotetramer with CBFA2T2 and CBFA2T3. Interacts with TCF12, SIN3A, HDAC1, HDAC2, HDAC3, NCOR1 and NCOR2. Interacts with ATN1 (via its N-terminus); the interaction enhances the transcriptional repression.

The protein localises to the nucleus. Its function is as follows. Transcriptional corepressor which facilitates transcriptional repression via its association with DNA-binding transcription factors and recruitment of other corepressors and histone-modifying enzymes. Can repress the expression of MMP7 in a ZBTB33-dependent manner. Can repress transactivation mediated by TCF12. Acts as a negative regulator of adipogenesis. The chain is Protein CBFA2T1 (Runx1t1) from Mus musculus (Mouse).